A 420-amino-acid chain; its full sequence is Caspase-12 (420 aa).

Residues 1-92 (MAAKRTHERD…QLSLQFPSDD (92 aa)) enclose the CARD domain. Phosphoserine is present on residues serine 85 and serine 90. The segment at 93–115 (EEDELQKMFTPSSASESRGKVED) is disordered. Catalysis depends on residues histidine 251 and cysteine 299.

It belongs to the peptidase C14A family. Heterotetramer that consists of two anti-parallel arranged heterodimers, each one formed by two subunits (Potential). May interact with TRAF2.

Involved in the activation cascade of caspases responsible for apoptosis execution. The polypeptide is Caspase-12 (Casp12) (Rattus norvegicus (Rat)).